The primary structure comprises 530 residues: Tyrosinase (530 aa).

The first 17 residues, 1–17, serve as a signal peptide directing secretion; it reads MLLAALYCLLWSFRTSA. Over 19–473 the chain is Lumenal, melanosome; that stretch reads HFPRACASSK…IKPYLEQAQR (455 aa). N-linked (GlcNAc...) asparagine glycosylation occurs at Asn-86. 3 residues coordinate Cu cation: His-180, His-202, and His-211. Asn-230, Asn-290, and Asn-337 each carry an N-linked (GlcNAc...) asparagine glycan. Residues His-363 and His-367 each coordinate Cu cation. N-linked (GlcNAc...) asparagine glycosylation is present at Asn-371. Residue His-390 participates in Cu cation binding. Residues 474 to 494 form a helical membrane-spanning segment; that stretch reads IWPWLIGAAVVGSVLTAVLGG. The Cytoplasmic portion of the chain corresponds to 495–530; the sequence is LTSLLCRRKRNQLPEEKQPLLMEKEDYHNLMYQSHL.

This sequence belongs to the tyrosinase family. Forms an OPN3-dependent complex with DCT in response to blue light in melanocytes. Requires Cu(2+) as cofactor. Post-translationally, glycosylated.

The protein localises to the melanosome membrane. Its subcellular location is the melanosome. The enzyme catalyses 2 L-dopa + O2 = 2 L-dopaquinone + 2 H2O. It carries out the reaction L-tyrosine + O2 = L-dopaquinone + H2O. The catalysed reaction is 2 5,6-dihydroxyindole-2-carboxylate + O2 = 2 indole-5,6-quinone-2-carboxylate + 2 H2O. Functionally, this is a copper-containing oxidase that functions in the formation of pigments such as melanins and other polyphenolic compounds. Catalyzes the initial and rate limiting step in the cascade of reactions leading to melanin production from tyrosine. In addition to hydroxylating tyrosine to DOPA (3,4-dihydroxyphenylalanine), also catalyzes the oxidation of DOPA to DOPA-quinone, and possibly the oxidation of DHI (5,6-dihydroxyindole) to indole-5,6 quinone. In Bos taurus (Bovine), this protein is Tyrosinase (TYR).